A 183-amino-acid polypeptide reads, in one-letter code: Chromophore lyase CpcT/CpeT 4 (183 aa).

It belongs to the CpcT/CpeT biliprotein lyase family.

Its function is as follows. Covalently attaches a chromophore to Cys residue(s) of phycobiliproteins. This is Chromophore lyase CpcT/CpeT 4 from Gloeobacter violaceus (strain ATCC 29082 / PCC 7421).